We begin with the raw amino-acid sequence, 192 residues long: dTTP/UTP pyrophosphatase (192 aa).

D68 (proton acceptor) is an active-site residue.

This sequence belongs to the Maf family. YhdE subfamily. The cofactor is a divalent metal cation.

The protein localises to the cytoplasm. It carries out the reaction dTTP + H2O = dTMP + diphosphate + H(+). The enzyme catalyses UTP + H2O = UMP + diphosphate + H(+). Functionally, nucleoside triphosphate pyrophosphatase that hydrolyzes dTTP and UTP. May have a dual role in cell division arrest and in preventing the incorporation of modified nucleotides into cellular nucleic acids. In Cereibacter sphaeroides (strain ATCC 17023 / DSM 158 / JCM 6121 / CCUG 31486 / LMG 2827 / NBRC 12203 / NCIMB 8253 / ATH 2.4.1.) (Rhodobacter sphaeroides), this protein is dTTP/UTP pyrophosphatase.